Here is a 942-residue protein sequence, read N- to C-terminus: Valine--tRNA ligase (942 aa).

The short motif at P43–H53 is the 'HIGH' region element. Positions K551 to S555 match the 'KMSKS' region motif. K554 contacts ATP. Positions E876 to L942 form a coiled coil.

It belongs to the class-I aminoacyl-tRNA synthetase family. ValS type 1 subfamily. Monomer.

It localises to the cytoplasm. The enzyme catalyses tRNA(Val) + L-valine + ATP = L-valyl-tRNA(Val) + AMP + diphosphate. Catalyzes the attachment of valine to tRNA(Val). As ValRS can inadvertently accommodate and process structurally similar amino acids such as threonine, to avoid such errors, it has a 'posttransfer' editing activity that hydrolyzes mischarged Thr-tRNA(Val) in a tRNA-dependent manner. This chain is Valine--tRNA ligase, found in Stenotrophomonas maltophilia (strain R551-3).